The primary structure comprises 635 residues: Threonine--tRNA ligase (635 aa).

Residues 1 to 61 form the TGS domain; that stretch reads MVSIRLPDGS…DHDVALAIVT (61 aa). Positions 242 to 533 are catalytic; the sequence is DHRKLGKQLD…LIEHHAGAMP (292 aa). Residues Cys333, His384, and His510 each coordinate Zn(2+).

The protein belongs to the class-II aminoacyl-tRNA synthetase family. In terms of assembly, homodimer. Zn(2+) is required as a cofactor.

It is found in the cytoplasm. It catalyses the reaction tRNA(Thr) + L-threonine + ATP = L-threonyl-tRNA(Thr) + AMP + diphosphate + H(+). Catalyzes the attachment of threonine to tRNA(Thr) in a two-step reaction: L-threonine is first activated by ATP to form Thr-AMP and then transferred to the acceptor end of tRNA(Thr). Also edits incorrectly charged L-seryl-tRNA(Thr). The sequence is that of Threonine--tRNA ligase from Paraburkholderia xenovorans (strain LB400).